Reading from the N-terminus, the 513-residue chain is GMP synthase [glutamine-hydrolyzing] (513 aa).

In terms of domain architecture, Glutamine amidotransferase type-1 spans 3–200 (SVLVLDFGSQ…LINIAGIRPD (198 aa)). Cys-80 functions as the Nucleophile in the catalytic mechanism. Catalysis depends on residues His-174 and Glu-176. The GMPS ATP-PPase domain maps to 201 to 388 (WSSKSFIEHQ…LGIPEDILMR (188 aa)). 228–234 (SGGVDST) contributes to the ATP binding site.

In terms of assembly, homodimer.

The catalysed reaction is XMP + L-glutamine + ATP + H2O = GMP + L-glutamate + AMP + diphosphate + 2 H(+). It functions in the pathway purine metabolism; GMP biosynthesis; GMP from XMP (L-Gln route): step 1/1. In terms of biological role, catalyzes the synthesis of GMP from XMP. The sequence is that of GMP synthase [glutamine-hydrolyzing] from Chlorobium luteolum (strain DSM 273 / BCRC 81028 / 2530) (Pelodictyon luteolum).